Reading from the N-terminus, the 579-residue chain is Suppressor of cytokine signaling 7 (579 aa).

3 disordered regions span residues 1-25 (MVFR…GPSE), 89-270 (PPPP…RTQS), and 295-315 (QRGL…RSLS). Pro residues-rich tracts occupy residues 89-99 (PPPPQPPPPAA), 155-165 (PPGPELPPVPF), and 185-196 (QPPPPPPPPGPL). The interval 124–492 (AESLETNSCS…GKFLYFLRSR (369 aa)) is mediates interaction with SORBS3. Positions 206 to 217 (GSFKIRLSRLFR) are enriched in basic residues. Positions 301–311 (PHPPTPPPPPR) are enriched in pro residues. Residues 398–507 (WYWGPMNWED…PTPVQLLYPV (110 aa)) enclose the SH2 domain. The SOCS box domain maps to 502 to 552 (QLLYPVSRFSNVKSLQHLCRFRIRQLVRIDHIPDLPLPKPLISYIRKFYYY).

As to quaternary structure, substrate-recognition component of the ECS(SOCS7) complex, composed of SOCS7, CUL5, ELOB, ELOC and RNF7/RBX2. Interacts, via the third proline-rich region, with the second SH3 domain of the adapter protein NCK1. Also interacts with GRB2, INSR, PLCG1, SORBS3/vinexin, and phosphorylated STAT3 and STAT5. Interacts with SEPT6. Interacts with phosphorylated IRS4 and PIK3R1. In terms of tissue distribution, widely expressed with higher expression in brain and testis where it is expressed by spermatocytes and early spermatids. Also significantly expressed in spleen, skeletal muscle and kidney.

It localises to the cytoplasm. The protein localises to the nucleus. The protein resides in the cell membrane. The protein operates within protein modification; protein ubiquitination. Functionally, substrate-recognition component of a cullin-5-RING E3 ubiquitin-protein ligase complex (ECS complex, also named CRL5 complex), which mediates the ubiquitination and subsequent proteasomal degradation of target proteins, such as DAB1 and IRS1. Specifically recognizes and binds phosphorylated proteins via its SH2 domain, promoting their ubiquitination. The ECS(SOCS7) complex acts as a key regulator of reelin signaling by mediating ubiquitination and degradation of phosphorylated DAB1 in the cortical plate of the developing cerebral cortex, thereby regulating neuron positioning during cortex development. Functions in insulin signaling and glucose homeostasis through IRS1 ubiquitination and subsequent proteasomal degradation. Also inhibits prolactin, growth hormone and leptin signaling by preventing STAT3 and STAT5 activation, sequestering them in the cytoplasm and reducing their binding to DNA. The sequence is that of Suppressor of cytokine signaling 7 from Mus musculus (Mouse).